We begin with the raw amino-acid sequence, 464 residues long: Argininosuccinate lyase (464 aa).

The protein belongs to the lyase 1 family. Argininosuccinate lyase subfamily.

It is found in the cytoplasm. It catalyses the reaction 2-(N(omega)-L-arginino)succinate = fumarate + L-arginine. It participates in amino-acid biosynthesis; L-arginine biosynthesis; L-arginine from L-ornithine and carbamoyl phosphate: step 3/3. In Pseudomonas syringae pv. syringae (strain B728a), this protein is Argininosuccinate lyase.